We begin with the raw amino-acid sequence, 332 residues long: Anthranilate phosphoribosyltransferase (332 aa).

Residues glycine 79, 82 to 83 (GD), threonine 87, 89 to 92 (NIST), 107 to 115 (KHGNRSVSS), and serine 119 contribute to the 5-phospho-alpha-D-ribose 1-diphosphate site. Residue glycine 79 coordinates anthranilate. Serine 91 contributes to the Mg(2+) binding site. Asparagine 110 lines the anthranilate pocket. Arginine 165 lines the anthranilate pocket. Mg(2+)-binding residues include aspartate 223 and glutamate 224.

It belongs to the anthranilate phosphoribosyltransferase family. Homodimer. Mg(2+) serves as cofactor.

The enzyme catalyses N-(5-phospho-beta-D-ribosyl)anthranilate + diphosphate = 5-phospho-alpha-D-ribose 1-diphosphate + anthranilate. The protein operates within amino-acid biosynthesis; L-tryptophan biosynthesis; L-tryptophan from chorismate: step 2/5. Its function is as follows. Catalyzes the transfer of the phosphoribosyl group of 5-phosphorylribose-1-pyrophosphate (PRPP) to anthranilate to yield N-(5'-phosphoribosyl)-anthranilate (PRA). The chain is Anthranilate phosphoribosyltransferase from Vibrio vulnificus (strain YJ016).